Here is a 256-residue protein sequence, read N- to C-terminus: D-aminoacyl-tRNA deacylase (256 aa).

The protein belongs to the DtdA deacylase family. In terms of assembly, monomer. Zn(2+) is required as a cofactor.

The enzyme catalyses a D-aminoacyl-tRNA + H2O = a tRNA + a D-alpha-amino acid + H(+). It carries out the reaction glycyl-tRNA(Ala) + H2O = tRNA(Ala) + glycine + H(+). D-aminoacyl-tRNA deacylase with broad substrate specificity. By recycling D-aminoacyl-tRNA to D-amino acids and free tRNA molecules, this enzyme counteracts the toxicity associated with the formation of D-aminoacyl-tRNA entities in vivo. This is D-aminoacyl-tRNA deacylase from Thermoplasma acidophilum (strain ATCC 25905 / DSM 1728 / JCM 9062 / NBRC 15155 / AMRC-C165).